Reading from the N-terminus, the 754-residue chain is Phosphoribosylformylglycinamidine synthase subunit PurL (754 aa).

The active site involves histidine 54. ATP is bound by residues tyrosine 57 and lysine 101. Glutamate 103 is a Mg(2+) binding site. Residues 104-107 (SHNH) and arginine 126 each bind substrate. The active-site Proton acceptor is histidine 105. Mg(2+) is bound at residue aspartate 127. Residue glutamine 252 coordinates substrate. Residue aspartate 280 participates in Mg(2+) binding. 324–326 (ESQ) contacts substrate. Residues 386–412 (PVYQRPVSRPESQEALNADSSKGLPRP) form a disordered region. ATP contacts are provided by asparagine 512 and glycine 549. Mg(2+) is bound at residue asparagine 550. A substrate-binding site is contributed by serine 552.

This sequence belongs to the FGAMS family. In terms of assembly, monomer. Part of the FGAM synthase complex composed of 1 PurL, 1 PurQ and 2 PurS subunits.

It localises to the cytoplasm. The catalysed reaction is N(2)-formyl-N(1)-(5-phospho-beta-D-ribosyl)glycinamide + L-glutamine + ATP + H2O = 2-formamido-N(1)-(5-O-phospho-beta-D-ribosyl)acetamidine + L-glutamate + ADP + phosphate + H(+). It functions in the pathway purine metabolism; IMP biosynthesis via de novo pathway; 5-amino-1-(5-phospho-D-ribosyl)imidazole from N(2)-formyl-N(1)-(5-phospho-D-ribosyl)glycinamide: step 1/2. Functionally, part of the phosphoribosylformylglycinamidine synthase complex involved in the purines biosynthetic pathway. Catalyzes the ATP-dependent conversion of formylglycinamide ribonucleotide (FGAR) and glutamine to yield formylglycinamidine ribonucleotide (FGAM) and glutamate. The FGAM synthase complex is composed of three subunits. PurQ produces an ammonia molecule by converting glutamine to glutamate. PurL transfers the ammonia molecule to FGAR to form FGAM in an ATP-dependent manner. PurS interacts with PurQ and PurL and is thought to assist in the transfer of the ammonia molecule from PurQ to PurL. The polypeptide is Phosphoribosylformylglycinamidine synthase subunit PurL (Mycobacterium leprae (strain Br4923)).